Reading from the N-terminus, the 212-residue chain is 2,3-bisphosphoglycerate-dependent phosphoglycerate mutase (212 aa).

Substrate-binding positions include 9 to 16, 22 to 23, arginine 61, 88 to 91, lysine 99, 115 to 116, and 159 to 160; these read RHGQSEWN, TG, ERDY, RR, and GN. Histidine 10 functions as the Tele-phosphohistidine intermediate in the catalytic mechanism. Glutamate 88 serves as the catalytic Proton donor/acceptor.

This sequence belongs to the phosphoglycerate mutase family. BPG-dependent PGAM subfamily. Homodimer.

The catalysed reaction is (2R)-2-phosphoglycerate = (2R)-3-phosphoglycerate. Its pathway is carbohydrate degradation; glycolysis; pyruvate from D-glyceraldehyde 3-phosphate: step 3/5. Catalyzes the interconversion of 2-phosphoglycerate and 3-phosphoglycerate. This is 2,3-bisphosphoglycerate-dependent phosphoglycerate mutase from Methylobacterium radiotolerans (strain ATCC 27329 / DSM 1819 / JCM 2831 / NBRC 15690 / NCIMB 10815 / 0-1).